A 73-amino-acid polypeptide reads, in one-letter code: Translation initiation factor IF-1 (73 aa).

The S1-like domain maps to 1 to 72 (MAKEDVIEVE…TKGRITYRFI (72 aa)).

This sequence belongs to the IF-1 family. In terms of assembly, component of the 30S ribosomal translation pre-initiation complex which assembles on the 30S ribosome in the order IF-2 and IF-3, IF-1 and N-formylmethionyl-tRNA(fMet); mRNA recruitment can occur at any time during PIC assembly.

It is found in the cytoplasm. One of the essential components for the initiation of protein synthesis. Stabilizes the binding of IF-2 and IF-3 on the 30S subunit to which N-formylmethionyl-tRNA(fMet) subsequently binds. Helps modulate mRNA selection, yielding the 30S pre-initiation complex (PIC). Upon addition of the 50S ribosomal subunit IF-1, IF-2 and IF-3 are released leaving the mature 70S translation initiation complex. The protein is Translation initiation factor IF-1 of Lactobacillus johnsonii (strain CNCM I-12250 / La1 / NCC 533).